A 404-amino-acid polypeptide reads, in one-letter code: Cysteine desulfurase IscS (404 aa).

Pyridoxal 5'-phosphate is bound by residues 75–76, Asn155, Gln183, and 203–205; these read AT and SAH. Lys206 carries the post-translational modification N6-(pyridoxal phosphate)lysine. Position 243 (Thr243) interacts with pyridoxal 5'-phosphate. Cys328 functions as the Cysteine persulfide intermediate in the catalytic mechanism. Position 328 (Cys328) interacts with [2Fe-2S] cluster.

Belongs to the class-V pyridoxal-phosphate-dependent aminotransferase family. NifS/IscS subfamily. In terms of assembly, homodimer. Forms a heterotetramer with IscU, interacts with other sulfur acceptors. Pyridoxal 5'-phosphate is required as a cofactor.

Its subcellular location is the cytoplasm. It carries out the reaction (sulfur carrier)-H + L-cysteine = (sulfur carrier)-SH + L-alanine. The protein operates within cofactor biosynthesis; iron-sulfur cluster biosynthesis. Master enzyme that delivers sulfur to a number of partners involved in Fe-S cluster assembly, tRNA modification or cofactor biosynthesis. Catalyzes the removal of elemental sulfur atoms from cysteine to produce alanine. Functions as a sulfur delivery protein for Fe-S cluster synthesis onto IscU, an Fe-S scaffold assembly protein, as well as other S acceptor proteins. This chain is Cysteine desulfurase IscS, found in Vibrio campbellii (strain ATCC BAA-1116).